The chain runs to 386 residues: Patatin-17 (386 aa).

The first 23 residues, 1 to 23 (MATTKSFLILIFMILATTSSTFA), serve as a signal peptide directing secretion. Positions 32-229 (LSIDGGGIRG…TVADPALLSI (198 aa)) constitute a PNPLA domain. The GXGXXG signature appears at 36-41 (GGGIRG). The GXSXG motif lies at 75–79 (GTSTG). The active-site Nucleophile is the Ser77. Asn202 is a glycosylation site (N-linked (GlcNAc...) asparagine). Asp215 functions as the Proton acceptor in the catalytic mechanism. Positions 215-217 (DGA) match the DGA/G motif. The stretch at 321–384 (ENALTGTTTE…DRKKLRANKA (64 aa)) forms a coiled coil.

It belongs to the patatin family.

It localises to the vacuole. In terms of biological role, non-specific lipolytic acyl hydrolase (LAH), an activity which is thought to be involved in the response of tubers to pathogens. Catalyzes the non-specific hydrolysis of phospholipids, glycolipids, sulfolipids, and mono- and diacylglycerols includng p-nitrophenyl caprate. Confers resistance to southern corn rootworm (SCRW). The chain is Patatin-17 from Solanum cardiophyllum (Heartleaf nightshade).